Here is a 159-residue protein sequence, read N- to C-terminus: Cyclic pyranopterin monophosphate synthase (159 aa).

Substrate is bound by residues 75-77 (LCH) and 113-114 (ME). D128 is an active-site residue.

The protein belongs to the MoaC family. Homohexamer; trimer of dimers.

It carries out the reaction (8S)-3',8-cyclo-7,8-dihydroguanosine 5'-triphosphate = cyclic pyranopterin phosphate + diphosphate. The protein operates within cofactor biosynthesis; molybdopterin biosynthesis. In terms of biological role, catalyzes the conversion of (8S)-3',8-cyclo-7,8-dihydroguanosine 5'-triphosphate to cyclic pyranopterin monophosphate (cPMP). The polypeptide is Cyclic pyranopterin monophosphate synthase (Cupriavidus necator (strain ATCC 17699 / DSM 428 / KCTC 22496 / NCIMB 10442 / H16 / Stanier 337) (Ralstonia eutropha)).